The chain runs to 172 residues: Shikimate kinase (172 aa).

11 to 16 is a binding site for ATP; sequence GAGKST. Ser15 provides a ligand contact to Mg(2+). Substrate-binding residues include Asp33, Arg57, and Gly79. Residue Arg117 participates in ATP binding. Residue Arg136 coordinates substrate. Arg153 serves as a coordination point for ATP.

It belongs to the shikimate kinase family. In terms of assembly, monomer. It depends on Mg(2+) as a cofactor.

It localises to the cytoplasm. It catalyses the reaction shikimate + ATP = 3-phosphoshikimate + ADP + H(+). Its pathway is metabolic intermediate biosynthesis; chorismate biosynthesis; chorismate from D-erythrose 4-phosphate and phosphoenolpyruvate: step 5/7. Its function is as follows. Catalyzes the specific phosphorylation of the 3-hydroxyl group of shikimic acid using ATP as a cosubstrate. The polypeptide is Shikimate kinase (Pseudomonas putida (strain ATCC 700007 / DSM 6899 / JCM 31910 / BCRC 17059 / LMG 24140 / F1)).